Here is a 278-residue protein sequence, read N- to C-terminus: Large ribosomal subunit protein uL2 (278 aa).

Disordered stretches follow at residues 1 to 58 (MAIR…GGGH) and 225 to 278 (VMNP…KNKR). Over residues 37-58 (LHGRGGRNAHGRITTRHKGGGH) the composition is skewed to basic residues. Positions 253–267 (PEGRTRKNKASDKLI) are enriched in basic and acidic residues. The span at 268 to 278 (VRRRRTGKNKR) shows a compositional bias: basic residues.

It belongs to the universal ribosomal protein uL2 family. Part of the 50S ribosomal subunit. Forms a bridge to the 30S subunit in the 70S ribosome.

One of the primary rRNA binding proteins. Required for association of the 30S and 50S subunits to form the 70S ribosome, for tRNA binding and peptide bond formation. It has been suggested to have peptidyltransferase activity; this is somewhat controversial. Makes several contacts with the 16S rRNA in the 70S ribosome. This Rhodococcus opacus (strain B4) protein is Large ribosomal subunit protein uL2.